A 199-amino-acid chain; its full sequence is 7-methyl-GTP pyrophosphatase (199 aa).

Residue Asp76 is the Proton acceptor of the active site.

Belongs to the Maf family. YceF subfamily. It depends on a divalent metal cation as a cofactor.

Its subcellular location is the cytoplasm. It carries out the reaction N(7)-methyl-GTP + H2O = N(7)-methyl-GMP + diphosphate + H(+). Functionally, nucleoside triphosphate pyrophosphatase that hydrolyzes 7-methyl-GTP (m(7)GTP). May have a dual role in cell division arrest and in preventing the incorporation of modified nucleotides into cellular nucleic acids. This Rhizobium etli (strain ATCC 51251 / DSM 11541 / JCM 21823 / NBRC 15573 / CFN 42) protein is 7-methyl-GTP pyrophosphatase.